Consider the following 727-residue polypeptide: Elongation factor 2 (727 aa).

A tr-type G domain is found at 19–260 (DQIRNMGICA…MAIKHLPNPL (242 aa)). GTP-binding positions include 28–35 (AHIDHGKT), 94–98 (DTPGH), and 148–151 (NKVD). Histidine 603 bears the Diphthamide mark.

Belongs to the TRAFAC class translation factor GTPase superfamily. Classic translation factor GTPase family. EF-G/EF-2 subfamily.

It is found in the cytoplasm. In terms of biological role, catalyzes the GTP-dependent ribosomal translocation step during translation elongation. During this step, the ribosome changes from the pre-translocational (PRE) to the post-translocational (POST) state as the newly formed A-site-bound peptidyl-tRNA and P-site-bound deacylated tRNA move to the P and E sites, respectively. Catalyzes the coordinated movement of the two tRNA molecules, the mRNA and conformational changes in the ribosome. The protein is Elongation factor 2 (fusA) of Methanococcus vannielii (strain ATCC 35089 / DSM 1224 / JCM 13029 / OCM 148 / SB).